A 432-amino-acid chain; its full sequence is Glutamyl-tRNA reductase (432 aa).

Substrate contacts are provided by residues 49-52 (TCNR), Ser-107, 112-114 (ETQ), and Gln-118. Cys-50 (nucleophile) is an active-site residue. An NADP(+)-binding site is contributed by 186-191 (GAGEMG).

Belongs to the glutamyl-tRNA reductase family. Homodimer.

The catalysed reaction is (S)-4-amino-5-oxopentanoate + tRNA(Glu) + NADP(+) = L-glutamyl-tRNA(Glu) + NADPH + H(+). It functions in the pathway porphyrin-containing compound metabolism; protoporphyrin-IX biosynthesis; 5-aminolevulinate from L-glutamyl-tRNA(Glu): step 1/2. Catalyzes the NADPH-dependent reduction of glutamyl-tRNA(Glu) to glutamate 1-semialdehyde (GSA). In Campylobacter jejuni subsp. jejuni serotype O:23/36 (strain 81-176), this protein is Glutamyl-tRNA reductase.